The primary structure comprises 253 residues: Phosphoadenosine 5'-phosphosulfate reductase (253 aa).

The Nucleophile; cysteine thiosulfonate intermediate role is filled by C239.

Belongs to the PAPS reductase family. CysH subfamily.

It localises to the cytoplasm. It catalyses the reaction [thioredoxin]-disulfide + sulfite + adenosine 3',5'-bisphosphate + 2 H(+) = [thioredoxin]-dithiol + 3'-phosphoadenylyl sulfate. Its pathway is sulfur metabolism; hydrogen sulfide biosynthesis; sulfite from sulfate: step 3/3. In terms of biological role, catalyzes the formation of sulfite from phosphoadenosine 5'-phosphosulfate (PAPS) using thioredoxin as an electron donor. In Aliivibrio fischeri (strain ATCC 700601 / ES114) (Vibrio fischeri), this protein is Phosphoadenosine 5'-phosphosulfate reductase.